The chain runs to 732 residues: Ribosomal RNA large subunit methyltransferase K/L (732 aa).

Residues 50 to 162 (MAYRICLWSR…RGRLLLGLDL (113 aa)) enclose the THUMP domain. Residues 396–424 (TERETSSEGDEPQGASGATSRPGPRNDGA) are disordered.

It belongs to the methyltransferase superfamily. RlmKL family.

The protein localises to the cytoplasm. It catalyses the reaction guanosine(2445) in 23S rRNA + S-adenosyl-L-methionine = N(2)-methylguanosine(2445) in 23S rRNA + S-adenosyl-L-homocysteine + H(+). The catalysed reaction is guanosine(2069) in 23S rRNA + S-adenosyl-L-methionine = N(2)-methylguanosine(2069) in 23S rRNA + S-adenosyl-L-homocysteine + H(+). Its function is as follows. Specifically methylates the guanine in position 2445 (m2G2445) and the guanine in position 2069 (m7G2069) of 23S rRNA. This is Ribosomal RNA large subunit methyltransferase K/L from Chromohalobacter salexigens (strain ATCC BAA-138 / DSM 3043 / CIP 106854 / NCIMB 13768 / 1H11).